The chain runs to 229 residues: Ras-related protein Rab-21 (229 aa).

Position 23 to 30 (23 to 30 (GEGAVGKT)) interacts with GTP. The Effector region motif lies at 45 to 53 (HEQTLQASF). GTP-binding positions include 71 to 75 (DTAGQ) and 129 to 132 (NKID). The tract at residues 179-229 (EANPPSSSTPPESQRGAPSSHPPSQPRQRSTLIVTDDSEQPSPKQGGGCCS) is disordered. Residues Cys-227 and Cys-228 are each lipidated (S-geranylgeranyl cysteine).

It belongs to the small GTPase superfamily. Rab family.

Its subcellular location is the golgi apparatus membrane. This chain is Ras-related protein Rab-21 (RAB21), found in Geodia cydonium (Sponge).